The primary structure comprises 293 residues: 1D-myo-inositol 2-acetamido-2-deoxy-alpha-D-glucopyranoside deacetylase 2 (293 aa).

Residues histidine 6, aspartate 9, and histidine 142 each contribute to the Zn(2+) site.

It belongs to the MshB deacetylase family. It depends on Zn(2+) as a cofactor.

The enzyme catalyses 1D-myo-inositol 2-acetamido-2-deoxy-alpha-D-glucopyranoside + H2O = 1D-myo-inositol 2-amino-2-deoxy-alpha-D-glucopyranoside + acetate. Functionally, catalyzes the deacetylation of 1D-myo-inositol 2-acetamido-2-deoxy-alpha-D-glucopyranoside (GlcNAc-Ins) in the mycothiol biosynthesis pathway. This Frankia alni (strain DSM 45986 / CECT 9034 / ACN14a) protein is 1D-myo-inositol 2-acetamido-2-deoxy-alpha-D-glucopyranoside deacetylase 2.